Here is a 417-residue protein sequence, read N- to C-terminus: UDP-N-acetylglucosamine 1-carboxyvinyltransferase (417 aa).

22–23 (KN) lines the phosphoenolpyruvate pocket. R91 serves as a coordination point for UDP-N-acetyl-alpha-D-glucosamine. C115 acts as the Proton donor in catalysis. C115 is subject to 2-(S-cysteinyl)pyruvic acid O-phosphothioketal. UDP-N-acetyl-alpha-D-glucosamine contacts are provided by residues 120-124 (RPVDL), D304, and I326.

This sequence belongs to the EPSP synthase family. MurA subfamily.

It is found in the cytoplasm. It carries out the reaction phosphoenolpyruvate + UDP-N-acetyl-alpha-D-glucosamine = UDP-N-acetyl-3-O-(1-carboxyvinyl)-alpha-D-glucosamine + phosphate. Its pathway is cell wall biogenesis; peptidoglycan biosynthesis. Cell wall formation. Adds enolpyruvyl to UDP-N-acetylglucosamine. This chain is UDP-N-acetylglucosamine 1-carboxyvinyltransferase, found in Nitratidesulfovibrio vulgaris (strain DSM 19637 / Miyazaki F) (Desulfovibrio vulgaris).